We begin with the raw amino-acid sequence, 513 residues long: OTU domain-containing protein 5-A (513 aa).

Disordered stretches follow at residues 1-75 (MTIL…GGAG) and 99-136 (GPGH…DEYE). The OTU domain maps to 166 to 289 (FIIKQMKEDG…NIHYNSVVNP (124 aa)). The tract at residues 171–177 (MKEDGAC) is cys-loop. The active site involves Asp-174. The active-site Nucleophile is the Cys-177. The tract at residues 226 to 236 (KRKNNCHGNHI) is variable-loop. Residues 277 to 282 (YHRNIH) are his-loop. His-282 is an active-site residue. Positions 387-446 (LEEWSGRSPRQRSTAGSPEHPDLHAELCMKPPSPGAPLILGKPPSPCAPGPSNQMSTGAD) are disordered.

Belongs to the peptidase C85 family.

The catalysed reaction is Thiol-dependent hydrolysis of ester, thioester, amide, peptide and isopeptide bonds formed by the C-terminal Gly of ubiquitin (a 76-residue protein attached to proteins as an intracellular targeting signal).. Functionally, deubiquitinating enzyme that may function as negative regulator of the innate immune system. Has peptidase activity towards 'Lys-48'- and 'Lys-63'-linked polyubiquitin chains. Can also cleave 'Lys-11'-linked ubiquitin chains (in vitro). In Xenopus laevis (African clawed frog), this protein is OTU domain-containing protein 5-A (otud5-a).